The sequence spans 246 residues: Apolipoprotein L domain-containing protein 1 (246 aa).

2 helical membrane-spanning segments follow: residues 50-72 and 89-109; these read SLAA…IVGL and GLGV…SLIF. Positions 193–220 form a coiled coil; sequence LKAKIQKLSESLESCTGALDELSEQLES.

It belongs to the apolipoprotein L family. Present at low levels in brain vascular cells (at protein level).

It is found in the cell membrane. It localises to the cell junction. Its subcellular location is the cytoplasmic vesicle. The protein resides in the secretory vesicle. Its function is as follows. Is a modulator of endothelial barrier permeability, required for proper organization of endothelial cell-cell junctions and cytoskeleton. It also plays a role in the modulation of secretory autophagy. May affect blood-brain barrier permeability. This is Apolipoprotein L domain-containing protein 1 (Apold1) from Rattus norvegicus (Rat).